Reading from the N-terminus, the 681-residue chain is Peroxisomal acyl-coenzyme A oxidase 2 (681 aa).

2 positions are modified to phosphoserine: serine 3 and serine 9. Phosphothreonine is present on threonine 13. Residues lysine 66, lysine 137, lysine 453, and lysine 561 each carry the N6-succinyllysine modification. The Microbody targeting signal motif lies at 679–681; sequence SKL.

The protein belongs to the acyl-CoA oxidase family. In terms of assembly, homodimer. Requires FAD as cofactor. As to expression, present in all tissues tested: heart, brain, placenta, lung, liver, skeletal muscle, kidney and pancreas. Most abundant in heart, liver and kidney.

The protein resides in the peroxisome. It carries out the reaction (25R)-3alpha,7alpha,12alpha-trihydroxy-5beta-cholestan-26-oyl-CoA + A + H2O = (24R,25R)-3alpha,7alpha,12alpha,24-tetrahydroxy-5beta-cholestan-26-oyl-CoA + AH2. The enzyme catalyses (25S)-3alpha,7alpha,12alpha-trihydroxy-5beta-cholestan-26-oyl-CoA + O2 = (24E)-3alpha,7alpha,12alpha-trihydroxy-5beta-cholest-24-en-26-oyl-CoA + H2O2. In terms of biological role, oxidizes the CoA esters of the bile acid intermediates di- and tri-hydroxycholestanoic acids. Capable of oxidizing short as well as long chain 2-methyl branched fatty acids. The polypeptide is Peroxisomal acyl-coenzyme A oxidase 2 (Homo sapiens (Human)).